A 303-amino-acid polypeptide reads, in one-letter code: Ribosomal protein L11 methyltransferase (303 aa).

Residues Thr-144, Gly-165, Asp-187, and Asn-235 each contribute to the S-adenosyl-L-methionine site.

This sequence belongs to the methyltransferase superfamily. PrmA family.

It is found in the cytoplasm. The catalysed reaction is L-lysyl-[protein] + 3 S-adenosyl-L-methionine = N(6),N(6),N(6)-trimethyl-L-lysyl-[protein] + 3 S-adenosyl-L-homocysteine + 3 H(+). Methylates ribosomal protein L11. The chain is Ribosomal protein L11 methyltransferase from Prochlorococcus marinus (strain MIT 9301).